A 603-amino-acid polypeptide reads, in one-letter code: Protein SHORT-ROOT 2 (603 aa).

Disordered stretches follow at residues 11–58 (HHHH…HSHS) and 106–140 (DFSS…SSAG). Residues 31–44 (SYPSSRGSTSSPSS) show a composition bias toward low complexity. Residues 45-58 (HHTHNHTYYHHSHS) are compositionally biased toward basic residues. The span at 108 to 125 (SSSSSSRQFHSGTGAPSS) shows a compositional bias: low complexity. The GRAS domain maps to 179–602 (AAPSSSGRWA…QPVVWASAWK (424 aa)). Positions 186–249 (RWAAQLLMEC…LTTSGPRTLR (64 aa)) are leucine repeat I (LRI). The tract at residues 268-354 (ALKFQELSPW…DTPHLSITTV (87 aa)) is VHIID. The VHIID motif lies at 318-322 (LHILD). The segment at 370-406 (EIGQRLEKFARLMGVPFSFRAVHHAGDLADLDLAALD) is leucine repeat II (LRII). The PFYRE stretch occupies residues 416–514 (LAVNCVNALR…ERAVGRAIVD (99 aa)). The tract at residues 517-602 (SCPASQSAER…QPVVWASAWK (86 aa)) is SAW.

This sequence belongs to the GRAS family. Does not interact with SCR1.

The protein resides in the nucleus. In terms of biological role, putative transcription factor involved in asymmetric cell division. This is Protein SHORT-ROOT 2 (SHR2) from Oryza sativa subsp. indica (Rice).